The chain runs to 134 residues: Small ribosomal subunit protein uS8c (134 aa).

This sequence belongs to the universal ribosomal protein uS8 family. In terms of assembly, part of the 30S ribosomal subunit.

It localises to the plastid. It is found in the chloroplast. In terms of biological role, one of the primary rRNA binding proteins, it binds directly to 16S rRNA central domain where it helps coordinate assembly of the platform of the 30S subunit. The polypeptide is Small ribosomal subunit protein uS8c (rps8) (Aethionema grandiflorum (Persian stone-cress)).